The chain runs to 268 residues: MLTFSFLTLFPELLAPFAAEAIVGKARERGLVDVNLVNMRDFAQNRHLKVDDTPYGGGAGMVIRVDVAERALHSLPPADEVILFTPAGERFTQQVAEELAGRQHLAFLCGRYEGFDARVEGLVTRELSIGDFVMMGGEAAAACVLEAVARLVPGVLGDPESHQADSFSSGLLDYPEYTRPAEWQGQPVPEVLKGGNHAAVAAWRRAQALERTWRRRPDLLPDAGLTPQDTATLLELGVSQEELDVWGAPPAPVKRHRKRRPETTESAS.

S-adenosyl-L-methionine-binding positions include glycine 110 and 129-134; that span reads IGDFVM. A disordered region spans residues 246–268; it reads WGAPPAPVKRHRKRRPETTESAS.

It belongs to the RNA methyltransferase TrmD family. As to quaternary structure, homodimer.

The protein resides in the cytoplasm. It catalyses the reaction guanosine(37) in tRNA + S-adenosyl-L-methionine = N(1)-methylguanosine(37) in tRNA + S-adenosyl-L-homocysteine + H(+). Functionally, specifically methylates guanosine-37 in various tRNAs. This chain is tRNA (guanine-N(1)-)-methyltransferase, found in Deinococcus deserti (strain DSM 17065 / CIP 109153 / LMG 22923 / VCD115).